Reading from the N-terminus, the 559-residue chain is Pentatricopeptide repeat-containing protein At4g38010 (559 aa).

PPR repeat units follow at residues 70–104 (SSFS…GFSP), 105–139 (DMFT…GFYD), 140–170 (DIYV…MPVR), 171–201 (DVVS…MDVE), 203–233 (NLAT…ILKR), 238–268 (SLET…LEKK), 269–304 (DKVS…GIKP), 305–339 (DGHI…GIKW), 340–370 (DTHI…IRSK), 371–405 (NVFT…GFKP), 406–440 (NLVT…EYNL), and 443–473 (KLEH…MPVK). Residues 478 to 554 (ICGAILSACK…VPGSSYIEKF (77 aa)) form a type E motif region.

This sequence belongs to the PPR family. PCMP-E subfamily.

This Arabidopsis thaliana (Mouse-ear cress) protein is Pentatricopeptide repeat-containing protein At4g38010 (PCMP-E45).